Consider the following 113-residue polypeptide: Transmembrane protein 256 (113 aa).

An N-terminal signal peptide occupies residues 1-29; sequence MAGPAAAFRRLGALSGAAALGFASYGAHG. Residues 30–63 are Extracellular-facing; that stretch reads AQFPDAYGKELFDKANKHHFLHSLALLGVPHCRK. Residue lysine 43 is modified to N6-acetyllysine. Residues 64 to 84 form a helical membrane-spanning segment; the sequence is PLWAGLLLASGTTLFCTSFYY. Residues 85-92 lie on the Cytoplasmic side of the membrane; the sequence is QALSGDPS. A helical membrane pass occupies residues 93-113; the sequence is IQTLAPAGGTLLLLGWLALAL.

The protein belongs to the TMEM256 family.

It is found in the membrane. The chain is Transmembrane protein 256 (TMEM256) from Homo sapiens (Human).